The sequence spans 277 residues: Small ribosomal subunit protein uS2 (277 aa).

Residues 254 to 277 (LAGAGSSALNDSGADLSEANPTEA) are disordered.

The protein belongs to the universal ribosomal protein uS2 family.

In Mycobacterium leprae (strain TN), this protein is Small ribosomal subunit protein uS2 (rpsB).